Reading from the N-terminus, the 225-residue chain is 3-dehydroquinate dehydratase (225 aa).

Residues serine 6, 30-32 (EWR), and arginine 62 contribute to the 3-dehydroquinate site. The active-site Proton donor/acceptor is histidine 118. The active-site Schiff-base intermediate with substrate is the lysine 143. Positions 186, 205, and 209 each coordinate 3-dehydroquinate.

It belongs to the type-I 3-dehydroquinase family. Homodimer.

It catalyses the reaction 3-dehydroquinate = 3-dehydroshikimate + H2O. It participates in metabolic intermediate biosynthesis; chorismate biosynthesis; chorismate from D-erythrose 4-phosphate and phosphoenolpyruvate: step 3/7. Its function is as follows. Involved in the third step of the chorismate pathway, which leads to the biosynthesis of aromatic amino acids. Catalyzes the cis-dehydration of 3-dehydroquinate (DHQ) and introduces the first double bond of the aromatic ring to yield 3-dehydroshikimate. This is 3-dehydroquinate dehydratase from Streptococcus pneumoniae (strain ATCC 700669 / Spain 23F-1).